Here is a 376-residue protein sequence, read N- to C-terminus: D-alanine--D-alanine ligase (376 aa).

The region spanning 153 to 366 is the ATP-grasp domain; sequence KLLLAGQGLP…YPELVHRLIQ (214 aa). 185–240 serves as a coordination point for ATP; that stretch reads VEALGYPVFVKPARAGSSIGITRVTSREGLAAAVAEAVSHDPKVVVEAALVGREIE. D317, E333, and N335 together coordinate Mg(2+).

The protein belongs to the D-alanine--D-alanine ligase family. It depends on Mg(2+) as a cofactor. Requires Mn(2+) as cofactor.

It localises to the cytoplasm. The enzyme catalyses 2 D-alanine + ATP = D-alanyl-D-alanine + ADP + phosphate + H(+). It participates in cell wall biogenesis; peptidoglycan biosynthesis. Functionally, cell wall formation. In Kineococcus radiotolerans (strain ATCC BAA-149 / DSM 14245 / SRS30216), this protein is D-alanine--D-alanine ligase.